A 258-amino-acid polypeptide reads, in one-letter code: Enterotoxin type G (258 aa).

Residues 1 to 25 (MKKLSTVIIILILEIVFHNMNYVNA) form the signal peptide. Residues Cys-116 and Cys-133 are joined by a disulfide bond.

Belongs to the staphylococcal/streptococcal toxin family.

Its subcellular location is the secreted. Staphylococcal enterotoxins cause the intoxication staphylococcal food poisoning syndrome. The illness is characterized by high fever, hypotension, diarrhea, shock, and in some cases death. This is Enterotoxin type G (entG) from Staphylococcus aureus (strain N315).